We begin with the raw amino-acid sequence, 227 residues long: Cytochrome c oxidase subunit 2 (227 aa).

Topologically, residues 1 to 14 (MAYPFQLGLQDATS) are mitochondrial intermembrane. A helical transmembrane segment spans residues 15-45 (PIMEELTNFHDHTLMIVFLISSLVLYLISLM). The Mitochondrial matrix portion of the chain corresponds to 46 to 59 (LSTKLIHTSTMDAQ). The chain crosses the membrane as a helical span at residues 60-87 (EVETIWTILPAIILIMIALPSLRILYMM). The Mitochondrial intermembrane segment spans residues 88–227 (DEINNPALTV…LFENWSISMS (140 aa)). Positions 161, 196, 198, 200, 204, and 207 each coordinate Cu cation. Residue glutamate 198 coordinates Mg(2+).

This sequence belongs to the cytochrome c oxidase subunit 2 family. In terms of assembly, component of the cytochrome c oxidase (complex IV, CIV), a multisubunit enzyme composed of 14 subunits. The complex is composed of a catalytic core of 3 subunits MT-CO1, MT-CO2 and MT-CO3, encoded in the mitochondrial DNA, and 11 supernumerary subunits COX4I, COX5A, COX5B, COX6A, COX6B, COX6C, COX7A, COX7B, COX7C, COX8 and NDUFA4, which are encoded in the nuclear genome. The complex exists as a monomer or a dimer and forms supercomplexes (SCs) in the inner mitochondrial membrane with NADH-ubiquinone oxidoreductase (complex I, CI) and ubiquinol-cytochrome c oxidoreductase (cytochrome b-c1 complex, complex III, CIII), resulting in different assemblies (supercomplex SCI(1)III(2)IV(1) and megacomplex MCI(2)III(2)IV(2)). Found in a complex with TMEM177, COA6, COX18, COX20, SCO1 and SCO2. Interacts with TMEM177 in a COX20-dependent manner. Interacts with COX20. Interacts with COX16. The cofactor is Cu cation.

Its subcellular location is the mitochondrion inner membrane. The enzyme catalyses 4 Fe(II)-[cytochrome c] + O2 + 8 H(+)(in) = 4 Fe(III)-[cytochrome c] + 2 H2O + 4 H(+)(out). Functionally, component of the cytochrome c oxidase, the last enzyme in the mitochondrial electron transport chain which drives oxidative phosphorylation. The respiratory chain contains 3 multisubunit complexes succinate dehydrogenase (complex II, CII), ubiquinol-cytochrome c oxidoreductase (cytochrome b-c1 complex, complex III, CIII) and cytochrome c oxidase (complex IV, CIV), that cooperate to transfer electrons derived from NADH and succinate to molecular oxygen, creating an electrochemical gradient over the inner membrane that drives transmembrane transport and the ATP synthase. Cytochrome c oxidase is the component of the respiratory chain that catalyzes the reduction of oxygen to water. Electrons originating from reduced cytochrome c in the intermembrane space (IMS) are transferred via the dinuclear copper A center (CU(A)) of subunit 2 and heme A of subunit 1 to the active site in subunit 1, a binuclear center (BNC) formed by heme A3 and copper B (CU(B)). The BNC reduces molecular oxygen to 2 water molecules using 4 electrons from cytochrome c in the IMS and 4 protons from the mitochondrial matrix. The sequence is that of Cytochrome c oxidase subunit 2 (MT-CO2) from Gerbilliscus robustus (Fringe-tailed gerbil).